Reading from the N-terminus, the 471-residue chain is MAQATKSGFNAGVQDYRLTYYTPDYTPKDTDLLACFRMTPQPGVPPEEAGAAVAAESSTGTWTTVWTDNLTDLDRYKGRCYDIEPVPNEDNQYFCFIAYPLDLFEEGSVTNVLTSLVGNVFGFKALRALRLEDIRFPVALIKTFQGPPHGITVERDKLNKYGRPLLGCTIKPKLGLSAKNYGRAVYECLRGGLDFTKDDENINSQPFMRWRDRFLFVQEAIEKAQAETNEVKGHYLNVTAGTCEEMMKRAEFAKEIGTPIVMHDFLTGGFTANTTLAKFCRDNGILLHIHRAMHAVIDRQKNHGIHFRVLAKCLRLSGGDHLHSGTVVGKLEGERGITMGFVDLMREDYVEEDRSRGIFFTQDYASMPGTMPVASGGIHVWHMPALVEIFGDDSCLQFGGGTLGHPWGNAPGATANRVALEACIQARNEGRNLAREGNDVIREACKWSPELAAACELWKEITFEFEAMDTL.

Substrate contacts are provided by asparagine 119 and threonine 169. The active-site Proton acceptor is the lysine 171. Lysine 173 serves as a coordination point for substrate. Residues lysine 197, aspartate 199, and glutamate 200 each coordinate Mg(2+). Lysine 197 bears the N6-carboxylysine mark. Histidine 290 acts as the Proton acceptor in catalysis. Substrate contacts are provided by arginine 291, histidine 323, and serine 375.

It belongs to the RuBisCO large chain family. Type I subfamily. In terms of assembly, heterohexadecamer of 8 large chains and 8 small chains; disulfide-linked. The disulfide link is formed within the large subunit homodimers. Mg(2+) is required as a cofactor. Post-translationally, the disulfide bond which can form in the large chain dimeric partners within the hexadecamer appears to be associated with oxidative stress and protein turnover.

The protein localises to the carboxysome. It carries out the reaction 2 (2R)-3-phosphoglycerate + 2 H(+) = D-ribulose 1,5-bisphosphate + CO2 + H2O. The catalysed reaction is D-ribulose 1,5-bisphosphate + O2 = 2-phosphoglycolate + (2R)-3-phosphoglycerate + 2 H(+). RuBisCO catalyzes two reactions: the carboxylation of D-ribulose 1,5-bisphosphate, the primary event in carbon dioxide fixation, as well as the oxidative fragmentation of the pentose substrate in the photorespiration process. Both reactions occur simultaneously and in competition at the same active site. This is Ribulose bisphosphate carboxylase large chain from Crocosphaera subtropica (strain ATCC 51142 / BH68) (Cyanothece sp. (strain ATCC 51142)).